Reading from the N-terminus, the 291-residue chain is 33 kDa chaperonin (291 aa).

Disulfide bonds link cysteine 237–cysteine 239 and cysteine 270–cysteine 273.

This sequence belongs to the HSP33 family. Under oxidizing conditions two disulfide bonds are formed involving the reactive cysteines. Under reducing conditions zinc is bound to the reactive cysteines and the protein is inactive.

It is found in the cytoplasm. Its function is as follows. Redox regulated molecular chaperone. Protects both thermally unfolding and oxidatively damaged proteins from irreversible aggregation. Plays an important role in the bacterial defense system toward oxidative stress. The sequence is that of 33 kDa chaperonin from Halalkalibacterium halodurans (strain ATCC BAA-125 / DSM 18197 / FERM 7344 / JCM 9153 / C-125) (Bacillus halodurans).